A 357-amino-acid chain; its full sequence is Elongation factor Ts (357 aa).

The involved in Mg(2+) ion dislocation from EF-Tu stretch occupies residues 82–85 (TDFV).

The protein belongs to the EF-Ts family.

Its subcellular location is the cytoplasm. Functionally, associates with the EF-Tu.GDP complex and induces the exchange of GDP to GTP. It remains bound to the aminoacyl-tRNA.EF-Tu.GTP complex up to the GTP hydrolysis stage on the ribosome. The polypeptide is Elongation factor Ts (Campylobacter jejuni subsp. doylei (strain ATCC BAA-1458 / RM4099 / 269.97)).